The sequence spans 273 residues: 4-hydroxy-tetrahydrodipicolinate reductase (273 aa).

NAD(+)-binding positions include Gly-12–Met-17 and Glu-38. Arg-39 lines the NADP(+) pocket. NAD(+) contacts are provided by residues Gly-102–Thr-104 and Ala-126–Phe-129. His-159 serves as the catalytic Proton donor/acceptor. (S)-2,3,4,5-tetrahydrodipicolinate is bound at residue His-160. Lys-163 functions as the Proton donor in the catalytic mechanism. Gly-169–Thr-170 serves as a coordination point for (S)-2,3,4,5-tetrahydrodipicolinate.

It belongs to the DapB family. Homotetramer.

It is found in the cytoplasm. It catalyses the reaction (S)-2,3,4,5-tetrahydrodipicolinate + NAD(+) + H2O = (2S,4S)-4-hydroxy-2,3,4,5-tetrahydrodipicolinate + NADH + H(+). The catalysed reaction is (S)-2,3,4,5-tetrahydrodipicolinate + NADP(+) + H2O = (2S,4S)-4-hydroxy-2,3,4,5-tetrahydrodipicolinate + NADPH + H(+). It functions in the pathway amino-acid biosynthesis; L-lysine biosynthesis via DAP pathway; (S)-tetrahydrodipicolinate from L-aspartate: step 4/4. Its function is as follows. Catalyzes the conversion of 4-hydroxy-tetrahydrodipicolinate (HTPA) to tetrahydrodipicolinate. In Klebsiella pneumoniae (strain 342), this protein is 4-hydroxy-tetrahydrodipicolinate reductase.